A 445-amino-acid chain; its full sequence is D-serine transporter DsdX (445 aa).

Helical transmembrane passes span 5 to 25 (IWVVSTLLISIVLIVLTIVKF), 29 to 49 (PFLALLLASFFVGTMMGMGPL), 57 to 77 (SGIGGTLGFLAAVIGLGTILG), 106 to 126 (VLVGLICGITLFVEVGVVLLI), 140 to 160 (LLKLAIPLCTALMAVHCVVPP), 178 to 198 (VIVYGLLVGLMASLIGGPLFL), 224 to 244 (TLPSLGATLFTVLLPIALMLV), 265 to 285 (IGNPITATFIAVFVAYYVLGI), 302 to 322 (FGSIANILLIIGAGGAFNAIL), 343 to 363 (ILLAWLVALILHAAVGSATVA), 385 to 405 (IIAIAIGSGAIGCTIVTDSLF), and 425 to 445 (TATFIASVIALAGTFLLSFII).

Belongs to the GntP permease family.

The protein localises to the cell inner membrane. With respect to regulation, uptake of D-serine is inhibited by carbonyl cyanide m-chlorophenylhydrazone (CCCP), and at high concentrations of D-threonine, stimulated by D-cycloserine and not affected by D-alanine or glycine. Its function is as follows. Protein that allows transport of D-serine across the inner membrane, does not transport D-alanine nor probably glycine. Is probably a H(+) symporter, as CCCP inhibits transport. Transports D-serine more efficiently than CycA. The protein is D-serine transporter DsdX (dsdX) of Escherichia coli O6:H1 (strain CFT073 / ATCC 700928 / UPEC).